We begin with the raw amino-acid sequence, 437 residues long: MRVLHVAPEAYPLAKVGGLADVVGALPKALGPLGVEAHVLLPWHGGLEARRVGEVAFAFFGREERAPLGERVEGGVRFLLLGVEGFGRERVYGYPDDAERYLRFALAAKEVARGYDLVHAHDWTAALLALYAPTVYTIHNLAHQGLVDPGLFFSWTGLPWSLFHMEALEFYGRVNLMKGGIVFARRVTTVSPSYAEEIQTPEFGMGLDGVLRRHAGKLRGILNGLDTEVFDPGKDPYLPAPYTREDPSGKARAKEAFRERTGLRPPVLAYVGRLDYQKGLDLVLKALPRLLEMGFRLYVQGVGDGGLQEAFLRAEEENPEGVRFLPAYDEAMARLAYAGAEAVLVPSRFEPCGLVQMIASRYGTPPVARAVGGLKDTVEDGRAGVLFETYHPEGLLYGVLRLFRLGAEEMGLRAMEKDFSWEGPARAYREVYREALG.

Residue Lys15 coordinates ADP-alpha-D-glucose.

This sequence belongs to the glycosyltransferase 1 family. Bacterial/plant glycogen synthase subfamily.

It carries out the reaction [(1-&gt;4)-alpha-D-glucosyl](n) + ADP-alpha-D-glucose = [(1-&gt;4)-alpha-D-glucosyl](n+1) + ADP + H(+). It functions in the pathway glycan biosynthesis; glycogen biosynthesis. Its function is as follows. Synthesizes alpha-1,4-glucan chains using ADP-glucose. The chain is Glycogen synthase from Thermus thermophilus (strain ATCC BAA-163 / DSM 7039 / HB27).